Reading from the N-terminus, the 3948-residue chain is Hybrid PKS-NRPS synthetase ucsA (3948 aa).

The region spanning 11–440 (NEPIAVIGSG…GTNAHAILER (430 aa)) is the Ketosynthase family 3 (KS3) domain. Active-site for beta-ketoacyl synthase activity residues include C184, H323, and H363. The tract at residues 548 to 881 (IFTGQGAQWP…FSTAIGQLWA (334 aa)) is malonyl-CoA:ACP transacylase (MAT) domain. An N-terminal hotdog fold region spans residues 940 to 1079 (HPLLGTLGAD…GHIRLTITDF (140 aa)). Residues 940 to 1254 (HPLLGTLGAD…IRLIPFAAAS (315 aa)) form a dehydratase (DH) domain region. A PKS/mFAS DH domain is found at 940 to 1256 (HPLLGTLGAD…LIPFAAASEA (317 aa)). Residue H972 is the Proton acceptor; for dehydratase activity of the active site. The interval 1098 to 1256 (MTEVDQNLFY…LIPFAAASEA (159 aa)) is C-terminal hotdog fold. Residue D1161 is the Proton donor; for dehydratase activity of the active site. The segment at 1299–1460 (LAHVVGQITH…LRAGFTGVET (162 aa)) is methyltransferase (MT) domain. The segment at 1989–2165 (TYILFGLAGA…ASVIDIGPIS (177 aa)) is ketoreductase (KR) domain. Positions 2275–2357 (DVARVLRHAI…GLVDFAVDNL (83 aa)) constitute a Carrier 1 domain. At S2317 the chain carries O-(pantetheine 4'-phosphoryl)serine. The span at 2381–2404 (PKAKTDAPAAAPTPASATAPGSKS) shows a compositional bias: low complexity. The segment at 2381 to 2473 (PKAKTDAPAA…SSQAASLESS (93 aa)) is disordered. Polar residues-rich tracts occupy residues 2405-2418 (DGNVSSIARSADQS) and 2426-2437 (PQPTAILTNATA). A compositionally biased stretch (low complexity) spans 2441–2456 (PVSPSLSVTGSTSSAA). Over residues 2462 to 2473 (PTSSQAASLESS) the composition is skewed to polar residues. Residues 2489-2926 (EKTLPMSYGQ…PQIFNSSKVQ (438 aa)) are condensation (C) domain. Residues 2950-3355 (DIAAVQPTLT…GEFVLQARIK (406 aa)) form an adenylation (A) (KR) domain region. Positions 3483–3507 (PLTNKGGLKETPVARPTRYQNDPIP) are disordered. Residues 3513 to 3592 (SSPFSSLDQV…QMASLLDGKD (80 aa)) form the Carrier 2 domain. O-(pantetheine 4'-phosphoryl)serine is present on S3552. The tract at residues 3633–3852 (LTGATGFLGL…QFVPVEDVAN (220 aa)) is reductase (R) domain.

The protein in the C-terminal section; belongs to the NRP synthetase family.

It functions in the pathway mycotoxin biosynthesis. In terms of biological role, hybrid PKS-NRPS synthetase; part of the gene cluster that mediates the biosynthesis of UCS1025A, a member of the pyrrolizidinone family that acts as a strong telomerase inhibitor and displays potent antibacterial and antitumor properties. These compounds share a hemiaminal-containing pyrrolizidinone core fused with a gamma-lactone, giving a furopyrrolizidine that is connected to a decalin fragment. The polyketide synthase module (PKS) of the PKS-NRPS ucsA is responsible for the synthesis of the polyketide backbone via the condensation of an acetyl-CoA starter unit with 6 malonyl-CoA units. The downstream nonribosomal peptide synthetase (NRPS) module then amidates the carboxyl end of the polyketide with a 2S,3S-methylproline derived from L-isoleucine by the 2-oxoglutarate-dependent dioxygenase ucsF which converts L-isoleucine to (4S,5S)-4-methylpyrroline-5-carboxylate that is further converted to 2S,3S-methylproline by the pyrroline-5-carboxylate reductase ucsG. Reductive release of the completed aminoacyl polyketide from the assembly line can form the 3-pyrrolin-2-one structure via an intramolecular Knoevenagel reaction. Because ucsA lacks a designated enoylreductase (ER) domain, the required activity is provided the enoyl reductase ucsL. This keto acyclic precursor is the substrate of the Diels-Alderase ucsH, that catalyzes the Diels-Alder cycloaddition. Oxidation of the 3S-methyl group to a carboxylate by the cytochrome P450 monooxygenase ucsK allows an oxa-Michael cyclization that might involve the reductase/dehydrogenase ucsI and which furnishes the furopyrrolizidine. The oxidase ucsJ likely plays a critical role in stereoselective reduction of the C5-C6 double bond to afford the required R-configured carboxylate group. Further enolization and oxidation at C5 by an unidentified enzyme affords the last intermediate that can undergo oxa-Michael cyclization to yield UCS1025A. This chain is Hybrid PKS-NRPS synthetase ucsA, found in Acremonium sp.